We begin with the raw amino-acid sequence, 152 residues long: MLLVAKKEITRIAKLELIGGQAKPGPALASVGINMGEFTKQFNEKTKDRMGDVVPVIITAFNDKSFLFELKTTPVTVLLKKAAKIESGAKNPKTEKVGKISKAEALKIAEYKMADLNAYDTEAALRMIAGTAKQMGLEIEGVDPVTKSKKGS.

Belongs to the universal ribosomal protein uL11 family. Part of the ribosomal stalk of the 50S ribosomal subunit. Interacts with L10 and the large rRNA to form the base of the stalk. L10 forms an elongated spine to which L12 dimers bind in a sequential fashion forming a multimeric L10(L12)X complex. In terms of processing, one or more lysine residues are methylated.

In terms of biological role, forms part of the ribosomal stalk which helps the ribosome interact with GTP-bound translation factors. This Mycoplasmoides gallisepticum (strain R(low / passage 15 / clone 2)) (Mycoplasma gallisepticum) protein is Large ribosomal subunit protein uL11.